Consider the following 2147-residue polypeptide: Probable serine/threonine-protein kinase roco6 (2147 aa).

Residues 1-1055 (MNSIHKQHYT…LDHSRVEFNR (1055 aa)) lie on the Extracellular side of the membrane. 11 LRR repeats span residues 69 to 89 (DMKYLDLSKRMIYSLELMMIP), 101 to 122 (SISILNLNDNLLGEIPESLKQL), 124 to 145 (QLISLSIRGNHILEIPLWFPEE), 148 to 169 (LLRKLDVSHNAISSVPNTFNKF), 171 to 192 (ILEDLNLSNNYISYIHPSLFPE), 193 to 214 (GIMRLNLSNNLFREVELPPWFE), 215 to 236 (SLLTLDISGNKLKHLGNLPFHL), 237 to 256 (VRVSIDDNHLESIDHKVILR), 306 to 328 (HLTHLDLSGNCISVLPPELANLT), 329 to 350 (ELVRLDLSFNILTTLPLYIVSY), and 352 to 372 (RLEHLDLQGTLDTLVSPPRRI). One can recognise a Roc domain in the interval 390-750 (QGEPSYRVKL…DLLKKTVVEL (361 aa)). Positions 390-750 (QGEPSYRVKL…DLLKKTVVEL (361 aa)) are small GTPase-like. 403-410 (GQENVGKT) is a GTP binding site. 2 disordered regions span residues 491–582 (NSNG…VGTN) and 602–621 (SNLSIGGSNGNNNNNSGGSG). 4 stretches are compositionally biased toward low complexity: residues 492 to 512 (SNGVNSNSQININSSSGNIHS), 519 to 531 (NVNSSGGIHSNNS), 539 to 568 (NSFLNNTNSNGTNNNSSNLNINTNSNNVNS), and 602 to 617 (SNLSIGGSNGNNNNNS). Residues 634 to 638 (DCAGQ) and 691 to 694 (THLD) contribute to the GTP site. The COR domain maps to 758–892 (PELYLKLEKL…RFELMFPLDS (135 aa)). 2 stretches are compositionally biased toward low complexity: residues 905 to 941 (GNSYVNNNNNNNNNSNNNNNGSNKSSPFKTTPSSPST) and 960 to 977 (SGNNSSSKNSTSTKRSIS). The interval 905-995 (GNSYVNNNNN…NSDLDLIGGG (91 aa)) is disordered. The WD 1 repeat unit spans residues 1051 to 1098 (VEFNRWIQLSFAPAGLFSRLLIRLLISKEFDMKPILYWRNGVVVESQS). The helical transmembrane segment at 1056–1076 (WIQLSFAPAGLFSRLLIRLLI) threads the bilayer. Residues 1077 to 2147 (SKEFDMKPIL…CGTNNVCIWS (1071 aa)) are Cytoplasmic-facing. LRR repeat units lie at residues 1237-1263 (ILSIKPASFGNNQIQFEVRVPPSPPPP), 1274-1297 (DDNITTTTLAVNNIKVLESGGSQP), and 1325-1348 (ESSLIQVEFDHNNQTLVISGTYKY). In terms of domain architecture, Protein kinase spans 1356 to 1627 (FESPKLIGRG…KIVKRIKQII (272 aa)). Residues 1362 to 1370 (IGRGASGKI) and Lys1383 contribute to the ATP site. The active-site Proton acceptor is the Asp1481. Residues 1653–1699 (ADSQPFHYHQQQQPSLNSTNQLQQQQYSSVLTSPRSNLSDSSNSSQN) form a disordered region. Over residues 1662–1699 (QQQQPSLNSTNQLQQQQYSSVLTSPRSNLSDSSNSSQN) the composition is skewed to low complexity. WD repeat units follow at residues 1735–1774 (QPEAKVNQLVWEVNSRRVWGGCESGEIIVWNAENGNQIFR) and 1778–1820 (LHPG…LDDQ). Residues 1821–1923 (SGTKSDFITK…WLTAINRVIN (103 aa)) form the PH domain. The WD 4 repeat unit spans residues 2031 to 2068 (HYSKPITSMALVEKNVWISCEDESLSVWDGDTGSFIRK).

It belongs to the protein kinase superfamily. TKL Ser/Thr protein kinase family. ROCO subfamily.

The protein localises to the membrane. The enzyme catalyses L-seryl-[protein] + ATP = O-phospho-L-seryl-[protein] + ADP + H(+). It carries out the reaction L-threonyl-[protein] + ATP = O-phospho-L-threonyl-[protein] + ADP + H(+). In terms of biological role, may act as a serine/threonine-protein kinase and guanine-nucleotide releasing factor. In Dictyostelium discoideum (Social amoeba), this protein is Probable serine/threonine-protein kinase roco6 (roco6).